The sequence spans 102 residues: Small ribosomal subunit protein uS10 (102 aa).

This sequence belongs to the universal ribosomal protein uS10 family. Part of the 30S ribosomal subunit.

In terms of biological role, involved in the binding of tRNA to the ribosomes. In Cupriavidus metallidurans (strain ATCC 43123 / DSM 2839 / NBRC 102507 / CH34) (Ralstonia metallidurans), this protein is Small ribosomal subunit protein uS10.